A 316-amino-acid polypeptide reads, in one-letter code: L-lactate dehydrogenase (316 aa).

NAD(+) is bound by residues V15, D37, K42, Y68, and 82-83 (GL). Residues Q85, R91, and 123–126 (NPVD) each bind substrate. NAD(+) contacts are provided by residues 121–123 (ASN) and T146. 151 to 154 (DTSR) provides a ligand contact to substrate. Positions 156 and 171 each coordinate beta-D-fructose 1,6-bisphosphate. Residue H178 is the Proton acceptor of the active site. Y222 carries the post-translational modification Phosphotyrosine. T231 lines the substrate pocket.

It belongs to the LDH/MDH superfamily. LDH family. Homotetramer.

It localises to the cytoplasm. The catalysed reaction is (S)-lactate + NAD(+) = pyruvate + NADH + H(+). It functions in the pathway fermentation; pyruvate fermentation to lactate; (S)-lactate from pyruvate: step 1/1. Its activity is regulated as follows. Allosterically activated by fructose 1,6-bisphosphate (FBP). Catalyzes the conversion of lactate to pyruvate. In Borrelia garinii subsp. bavariensis (strain ATCC BAA-2496 / DSM 23469 / PBi) (Borreliella bavariensis), this protein is L-lactate dehydrogenase.